A 128-amino-acid chain; its full sequence is Arsenic resistance transcriptional regulator ArsR1 (128 aa).

In terms of domain architecture, HTH arsR-type spans 11-103; it reads MREILTPPIV…AMLKGVVDAN (93 aa). Positions 43 and 45 each coordinate arsenite. A DNA-binding region (H-T-H motif) is located at residues 44 to 67; that stretch reads VCELTHALELSQPKISRHLAQLRE.

Homodimer.

It localises to the cytoplasm. In terms of biological role, binds arsenite and regulates the expression of arsenic efflux pumps. In vitro, also binds antimony and bismuth, but not arsenate. This Pseudomonas putida (strain ATCC 47054 / DSM 6125 / CFBP 8728 / NCIMB 11950 / KT2440) protein is Arsenic resistance transcriptional regulator ArsR1.